The primary structure comprises 601 residues: Multidrug and toxin extrusion protein 2 (601 aa).

The Cytoplasmic segment spans residues 1–62 (MNTAFAGFDE…PRGFWDEARA (62 aa)). The chain crosses the membrane as a helical span at residues 63-83 (LFVLSGPLFLFQVLNFLTYVV). At 84 to 95 (GTVFCGHLGKVE) the chain is on the extracellular side. A helical transmembrane segment spans residues 96–116 (LASVTLGVAFVNVCGVSVGAG). Over 117 to 145 (LSSACDTLMSQSFGSPNKKHVGVILQRGS) the chain is Cytoplasmic. A helical membrane pass occupies residues 146–166 (LILLLCCLPCWALFLNTQHIL). Residues 167–182 (LLFRQDPAVSRLTQDY) are Extracellular-facing. The chain crosses the membrane as a helical span at residues 183–203 (AMIFIPGLPAIFLYSLLAKYL). At 204–212 (QNQGIVWPQ) the chain is on the cytoplasmic side. A helical transmembrane segment spans residues 213-233 (VLSGVVGNCVNGVANYALVSV). Residues 234 to 241 (LNLGVRGS) lie on the Extracellular side of the membrane. A helical membrane pass occupies residues 242–262 (AYANTISQFVQAAFLFLHIVL). Residues 263-281 (KKLHLETWEGWSSQCLRDW) are Cytoplasmic-facing. The helical transmembrane segment at 282 to 301 (GPFLSLAIPSMLMMCVEWWA) threads the bilayer. The Extracellular portion of the chain corresponds to 302-320 (YEIGSFLMGLLGVVDLSGQ). The helical transmembrane segment at 321–341 (AIIYEVATVVYMIPMGLGMAV) threads the bilayer. Residues 342-361 (CVRVGTALGAADTLQAKRSA) lie on the Cytoplasmic side of the membrane. The helical transmembrane segment at 362–382 (VSGLLCTAGTSLVVGTLLGLL) threads the bilayer. Residues 383-402 (NSQLGYIFTSDEEVIALVNQ) lie on the Extracellular side of the membrane. Residues 403–423 (VLPIYIVFQLVEAVCCVFGGV) traverse the membrane as a helical segment. The Cytoplasmic portion of the chain corresponds to 424–437 (LRGTGKQAFGAIVN). The helical transmembrane segment at 438–458 (AIMYYIVGLPLGIVLTFVVGM) threads the bilayer. R459 is a topological domain (extracellular). The helical transmembrane segment at 460–480 (IMGLWLGMLTCIFLAAVTFVV) threads the bilayer. The Cytoplasmic segment spans residues 481–577 (YAVQLDWKLA…LSVRQLLFRR (97 aa)). Residues 578 to 598 (GAALAASVAVLMAGLLVRVLT) form a helical membrane-spanning segment. Residues 599–601 (TGY) are Extracellular-facing.

The protein belongs to the multi antimicrobial extrusion (MATE) (TC 2.A.66.1) family. In terms of tissue distribution, expressed in renal cortical tissues.

The protein localises to the cell membrane. It localises to the apical cell membrane. The catalysed reaction is thiamine(out) + H(+)(in) = thiamine(in) + H(+)(out). It carries out the reaction estrone 3-sulfate(in) + H(+)(out) = estrone 3-sulfate(out) + H(+)(in). It catalyses the reaction creatinine(in) + H(+)(out) = creatinine(out) + H(+)(in). Multidrug efflux pump that functions as a H(+)/organic cation antiporter. Mediates the efflux of cationic compounds, such as the model cations, tetraethylammonium (TEA) and 1-methyl-4-phenylpyridinium (MPP+), the platinum-based drug oxaliplatin or weak bases that are positively charged at physiological pH, cimetidine or the antidiabetic drug metformin. Mediates the efflux of the endogenous compounds creatinine, thiamine and estrone-3-sulfate. Plays a physiological role in the excretion of drugs, toxins and endogenous metabolites through the kidney. This Oryctolagus cuniculus (Rabbit) protein is Multidrug and toxin extrusion protein 2 (SLC47A2).